A 76-amino-acid chain; its full sequence is Large ribosomal subunit protein eL20 (76 aa).

This sequence belongs to the eukaryotic ribosomal protein eL20 family. In terms of assembly, part of the 50S ribosomal subunit. Binds 23S rRNA.

The polypeptide is Large ribosomal subunit protein eL20 (Methanococcus maripaludis (strain C5 / ATCC BAA-1333)).